A 1744-amino-acid chain; its full sequence is Complement C4-B (1744 aa).

A signal peptide spans 1 to 19 (MRLLWGLIWASSFFTLSLQ). The cysteines at positions 68 and 97 are disulfide-linked. An N-linked (GlcNAc...) asparagine glycan is attached at Asn226. Cys635 and Cys669 are disulfide-bonded. Positions 676-679 (RKKR) are excised as a propeptide. Intrachain disulfides connect Cys702–Cys728, Cys703–Cys735, and Cys716–Cys736. One can recognise an Anaphylatoxin-like domain in the interval 702 to 736 (CCQDGVTRLPMMRSCEQRAARVQQPDCREPFLSCC). An N-linked (GlcNAc...) asparagine glycan is attached at Asn862. Residue Ser918 is modified to Phosphoserine. A cross-link (isoglutamyl cysteine thioester (Cys-Gln)) is located at residues 1010 to 1013 (CGEQ). N-linked (GlcNAc...) asparagine glycans are attached at residues Asn1328 and Asn1391. Sulfotyrosine is present on residues Tyr1417, Tyr1420, and Tyr1422. The propeptide occupies 1447–1453 (RRNRRRR). 5 cysteine pairs are disulfide-bonded: Cys1471–Cys1535, Cys1583–Cys1588, Cys1595–Cys1673, Cys1618–Cys1742, and Cys1718–Cys1727. An NTR domain is found at 1595–1742 (CPRQRRALER…FLQEYGTQGC (148 aa)).

In terms of assembly, in absence of complement activation, circulates in blood as a disulfide-linked trimer of an alpha, beta and gamma chain. As to quaternary structure, complement C4b is composed of complement C4b-A, complement C4 beta and complement C4 gamma chains that are associated via disulfide bonds. Non-enzymatic component of the C3 convertase, also named C4bC2b, composed of the serine protease complement C2b (C2), as well as complement C4b. Non-enzymatic component of the C5 convertase, also named C4bC2bC3b, composed of the serine protease complement C2b (C2), complement C3b, as well as complement C4b. Interacts with CR1 (via Sushi 1 and Sushi 2 domains). (Microbial infection) Binds B.burgdorferi OspC, the interaction is inhibited by complement factor C2. This binding may inhibit the complement cascade and allow the bacteria to survive in the host bloodstream. Prior to secretion, the single-chain precursor is enzymatically cleaved by plasminogen (PLG) to yield non-identical chains alpha, beta and gamma. During activation of the complement systems, the alpha chain is cleaved into C4a and C4b by different proteases depending on the complement pathway: C4b stays linked to the beta and gamma chains, while C4a is released in the plasma. The alpha chain is cleaved by C1S to generate C4a and C4b following activation by the classical complement system. The alpha chain is cleaved to generate C4a and C4b by MASP2 following activation by the lectin complement system. The alpha chain is cleaved by GZMK to generate C4a and C4b following activation by the GZMK complement system. Further degradation of C4b by C1 into the inactive fragments C4c and C4d blocks the generation of C3 convertase. The proteolytic cleavages often are incomplete so that many structural forms can be found in plasma. In terms of processing, upon activation, the internal thioester bond reacts with carbohydrate antigens on the target surface to form amide or ester bonds, leading to covalent association with the surface of pathogens. Post-translationally, complement C4b interacts with complement C3b via a thioester linkage. N- and O-glycosylated. O-glycosylated with a core 1 or possibly core 8 glycan. Complement component C4 is expressed at highest levels in the liver, at moderate levels in the adrenal cortex, adrenal medulla, thyroid gland, and the kidney, and at lowest levels in the heart, ovary, small intestine, thymus, pancreas and spleen. The extra-hepatic sites of expression may be important for the local protection and inflammatory response.

It is found in the secreted. The protein resides in the synapse. The protein localises to the cell projection. It localises to the axon. Its subcellular location is the dendrite. It is found in the cell surface. Functionally, precursor of non-enzymatic components of the classical, lectin and GZMK complement pathways, which consist in a cascade of proteins that leads to phagocytosis and breakdown of pathogens and signaling that strengthens the adaptive immune system. Non-enzymatic component of C3 and C5 convertases. Generated following cleavage by complement proteases (C1S, MASP2 or GZMK, depending on the complement pathway), it covalently attaches to the surface of pathogens, where it acts as an opsonin that marks the surface of antigens for removal. It then recruits the serine protease complement C2b to form the C3 and C5 convertases, which cleave and activate C3 and C5, respectively, the next components of the complement pathways. Complement C4b-B isotype catalyzes the transacylation of the thioester carbonyl group to form ester bonds with carbohydrate antigens, while C4b-A isotype is responsible for effective binding to form amide bonds with immune aggregates or protein antigens. Its function is as follows. Putative humoral mediator released following cleavage by complement proteases (C1S, MASP2 or GZMK, depending on the complement pathway). While it is strongly similar to anaphylatoxins, its role is unclear. Was reported to act as a mediator of local inflammatory process; however these effects were probably due to contamination with C3a and/C5a anaphylatoxins in biological assays. This Homo sapiens (Human) protein is Complement C4-B.